The sequence spans 242 residues: ATP synthase subunit a (242 aa).

The next 5 membrane-spanning stretches (helical) occupy residues 21-41 (LASVLMVVITAILVFILAIVC), 83-103 (AVTLILFIFVANMLGLPFAIV), 118-137 (ATVTLTLSTTMILLTHYYGI), 175-195 (LYGNIFAGELLLGLLASLFFE), and 198-218 (AWGWIISIPGLIVWQAFSIFV).

The protein belongs to the ATPase A chain family. F-type ATPases have 2 components, CF(1) - the catalytic core - and CF(0) - the membrane proton channel. CF(1) has five subunits: alpha(3), beta(3), gamma(1), delta(1), epsilon(1). CF(0) has three main subunits: a(1), b(2) and c(9-12). The alpha and beta chains form an alternating ring which encloses part of the gamma chain. CF(1) is attached to CF(0) by a central stalk formed by the gamma and epsilon chains, while a peripheral stalk is formed by the delta and b chains.

It localises to the cell membrane. In terms of biological role, key component of the proton channel; it plays a direct role in the translocation of protons across the membrane. The protein is ATP synthase subunit a of Staphylococcus epidermidis (strain ATCC 35984 / DSM 28319 / BCRC 17069 / CCUG 31568 / BM 3577 / RP62A).